The chain runs to 90 residues: Essential MCU regulator, mitochondrial (90 aa).

The chain crosses the membrane as a helical span at residues 49–68 (GVLKLIFVSASSLYIGGLIA).

This sequence belongs to the SMDT1/EMRE family.

It is found in the mitochondrion inner membrane. Functionally, essential regulatory subunit of the mitochondrial calcium uniporter (mcu-1) channel, a protein that mediates calcium uptake into mitochondria. The protein is Essential MCU regulator, mitochondrial of Caenorhabditis elegans.